A 468-amino-acid chain; its full sequence is BTB/POZ domain-containing protein 17 (468 aa).

The first 16 residues, 1 to 16 (MRRFCVVPLLLVLVEA), serve as a signal peptide directing secretion. In terms of domain architecture, BTB spans 51–120 (TDTILRIRTA…FYCGEISVNL (70 aa)). In terms of domain architecture, BACK spans 159–259 (VVSWYHYALR…ISPSQLFQIQ (101 aa)).

The protein localises to the secreted. This Xenopus tropicalis (Western clawed frog) protein is BTB/POZ domain-containing protein 17 (btbd17).